A 322-amino-acid chain; its full sequence is MIKAGIIGGAGYTAGELIRLLINHPETEIVFINSTSNAGNKITDVHEGLYGECDLTFTDELPLEDIDVLFFCTAHGDTKKFMESHNIPEELKIIDLSMDYRIASPDHDFIYGLPELNRRATCTAKHVANPGCFATCIQLGLLPLAKHLMLNEDVMVNAITGSTGAGVKPGATSHFSWRNNNMSVYKAFEHQHVPEIKQSLKQLQNSFDAEIDFIPYRGDFPRGIFATLVVKTKVALEEIVRMYEEYYAKDSFVHIVDKNIDLKQVVNTNKCLIHLEKHGDKLLIISCIDNLLKGASGQAVHNMNLMFNLEETVGLRLKPSAF.

Cys132 is a catalytic residue.

This sequence belongs to the NAGSA dehydrogenase family. Type 1 subfamily.

It localises to the cytoplasm. It catalyses the reaction N-acetyl-L-glutamate 5-semialdehyde + phosphate + NADP(+) = N-acetyl-L-glutamyl 5-phosphate + NADPH + H(+). The protein operates within amino-acid biosynthesis; L-arginine biosynthesis; N(2)-acetyl-L-ornithine from L-glutamate: step 3/4. Its function is as follows. Catalyzes the NADPH-dependent reduction of N-acetyl-5-glutamyl phosphate to yield N-acetyl-L-glutamate 5-semialdehyde. In Bacteroides fragilis (strain YCH46), this protein is N-acetyl-gamma-glutamyl-phosphate reductase.